Consider the following 54-residue polypeptide: Large ribosomal subunit protein bL33 (54 aa).

This sequence belongs to the bacterial ribosomal protein bL33 family.

The protein is Large ribosomal subunit protein bL33 of Corynebacterium glutamicum (strain R).